Here is a 516-residue protein sequence, read N- to C-terminus: Delta(24)-sterol reductase (516 aa).

The signal sequence occupies residues 1–22; the sequence is MEPAVSLAVCALLFLLWVRVKG. Residues 23–31 lie on the Lumenal side of the membrane; sequence LEFVLIHQR. A helical membrane pass occupies residues 32-52; sequence WVFVCLFLLPLSLIFDIYYYV. The Cytoplasmic portion of the chain corresponds to 53–516; it reads RAWVVFKLSS…YDKICKAARH (464 aa). Residues 58 to 234 form the FAD-binding PCMH-type domain; the sequence is FKLSSAPRLH…VAAEIRIIPA (177 aa). FAD is bound at residue 163–175; the sequence is TVGGLIMGTGIES.

Belongs to the FAD-binding oxidoreductase/transferase type 4 family. The cofactor is FAD.

It is found in the endoplasmic reticulum membrane. It localises to the golgi apparatus membrane. It catalyses the reaction 5alpha-cholest-8-en-3beta-ol + NADP(+) = zymosterol + NADPH + H(+). The enzyme catalyses cholesterol + NADP(+) = desmosterol + NADPH + H(+). It carries out the reaction lanosterol + NADPH + H(+) = 24,25-dihydrolanosterol + NADP(+). The protein operates within steroid biosynthesis; cholesterol biosynthesis. In terms of biological role, catalyzes the reduction of the delta-24 double bond of sterol intermediates during cholesterol biosynthesis. In addition to its cholesterol-synthesizing activity, can protect cells from oxidative stress by reducing caspase 3 activity during apoptosis induced by oxidative stress. Also protects against amyloid-beta peptide-induced apoptosis. The chain is Delta(24)-sterol reductase (Dhcr24) from Mus musculus (Mouse).